The following is a 197-amino-acid chain: Recombination protein RecR (197 aa).

The segment at 54–69 adopts a C4-type zinc-finger fold; the sequence is CQQCNNYTEQTLCTLC. In terms of domain architecture, Toprim spans 77 to 172; that stretch reads TLLCVVESPA…NISQLAHGIP (96 aa).

The protein belongs to the RecR family.

In terms of biological role, may play a role in DNA repair. It seems to be involved in an RecBC-independent recombinational process of DNA repair. It may act with RecF and RecO. In Legionella pneumophila (strain Paris), this protein is Recombination protein RecR.